The sequence spans 455 residues: uncharacterized protein (455 aa).

A signal peptide spans 1–27 (MSQRQQFQFLLSFLILIFLKFIIQIRC). Residues 29-434 (ESNGVIIIKN…GDDENLINSS (406 aa)) are Extracellular-facing. N-linked (GlcNAc...) asparagine glycosylation is found at Asn-136, Asn-148, Asn-210, and Asn-298. Residues 383–402 (SSSTTSTTSSSSSSSSSTTT) are disordered. Asn-421 and Asn-432 each carry an N-linked (GlcNAc...) asparagine glycan. The chain crosses the membrane as a helical span at residues 435 to 455 (SVIKFSTPIIMIIIILINIKF).

The protein resides in the membrane. This is an uncharacterized protein from Dictyostelium discoideum (Social amoeba).